The sequence spans 468 residues: MRIEHDFIGQMEISDEVYYGIQTLRASENFFITNDKLCSYPVFIKSFAQVKKAAALANAQLGLIDEKLKIAICHACDLLVDGKYHDQFIVDMIQGGAGTSTNMNMNEVIANLALEYMGHQKGEYQFCHPNDHVNRSQSTNDAYPSALKIAIYERLSNLVAPMKALRDAFAQKAKEFAHVIKMGRTQLQDAVPMTLGQEFETYALMVDRDIEQVLDARNWVRELNLGGTVIGTGINSHPDYRSLIEKKIQEVTGRPFVMANNLIEATQSTGAYVQVSGVLKRIAVKLSKVCNDLRLLSSGPRAGLNEINLPKMQPGSSIMPGKVNPVIPEVVNQVCFAVIGNDLSVALAAEGGQLQLNVFEPVIAYKLFHSFVILGRAIETLTTKCVEGITANEKICHDYVFNSIGIVTALNPHIGYEKSAMIAKEALKSDRSIYDIALEKKILTKEQLDDIFKPENMLSPHAFKKHKD.

L-aspartate is bound by residues T99, S138, T139, N140, and T185. The interval 315 to 324 is SS loop; it reads GSSIMPGKVN. S316 functions as the Proton acceptor in the catalytic mechanism. The L-aspartate site is built by S317 and K322.

This sequence belongs to the class-II fumarase/aspartase family. Aspartase subfamily. Homotetramer.

The catalysed reaction is L-aspartate = fumarate + NH4(+). In terms of biological role, catalyzes the reversible conversion of L-aspartate to fumarate and ammonia. This chain is Aspartate ammonia-lyase (aspA), found in Helicobacter pylori (strain J99 / ATCC 700824) (Campylobacter pylori J99).